We begin with the raw amino-acid sequence, 258 residues long: Agamous-like MADS-box protein AGL3 (258 aa).

In terms of domain architecture, MADS-box spans Arg-3 to Phe-57. The region spanning Leu-88–Ala-178 is the K-box domain. A disordered region spans residues Ser-186–Ala-214. Residues Gln-191–Gln-200 are compositionally biased toward low complexity. Residues Gly-201–Pro-210 are compositionally biased toward polar residues.

As to quaternary structure, forms homodimers. Interacts with TT16/AGL32. Expressed in aerial vegetative organs and flowers, but not in roots. Expressed in flower primordia.

It is found in the nucleus. Functionally, probable transcription factor that binds specifically to the CArG box DNA sequence 5'-CC (A/T)6 GG-3'. Plays an important role in the determination of flower meristem identity. Involved in the specification of sepal identity. Contributes to the development of petals, stamens and carpels. This chain is Agamous-like MADS-box protein AGL3 (AGL3), found in Arabidopsis thaliana (Mouse-ear cress).